The following is a 508-amino-acid chain: UDP-N-acetylmuramyl-tripeptide synthetase (508 aa).

Residue serine 35 coordinates UDP-N-acetyl-alpha-D-muramoyl-L-alanyl-D-glutamate. 118-124 lines the ATP pocket; that stretch reads GTDGKSS. Residues 163–164, threonine 190, and arginine 200 contribute to the UDP-N-acetyl-alpha-D-muramoyl-L-alanyl-D-glutamate site; that span reads ST. N6-carboxylysine is present on lysine 232.

It belongs to the MurCDEF family. MurE subfamily. Carboxylation is probably crucial for Mg(2+) binding and, consequently, for the gamma-phosphate positioning of ATP.

The protein localises to the cytoplasm. Its pathway is cell wall biogenesis; peptidoglycan biosynthesis. Its function is as follows. Catalyzes the addition of an amino acid to the nucleotide precursor UDP-N-acetylmuramoyl-L-alanyl-D-glutamate (UMAG) in the biosynthesis of bacterial cell-wall peptidoglycan. The sequence is that of UDP-N-acetylmuramyl-tripeptide synthetase from Borrelia garinii subsp. bavariensis (strain ATCC BAA-2496 / DSM 23469 / PBi) (Borreliella bavariensis).